The primary structure comprises 408 residues: Putative odorant receptor 92a (408 aa).

Topologically, residues 1–52 (MLFRKRKPKSDDEVITFDELTRFPMTFYKTIGEDLYSDRDPNVIRRYLLRFY) are cytoplasmic. Residues 53 to 73 (LVLGFLNFNAYVVGEIAYFIV) form a helical membrane-spanning segment. His-74 is a topological domain (extracellular). A helical membrane pass occupies residues 75-95 (IMSTTTLLEATAVAPCIGFSF). At 96–144 (MADFKQFGLTVNRKRLVRLLDDLKEIFPLDLEAQRKYNVSFYRKHMNRV) the chain is on the cytoplasmic side. A helical membrane pass occupies residues 145 to 165 (MTLFTILCMTYTSSFSFYPAI). Topologically, residues 166–209 (KSTIKYYLMGSEIFERNYGFHILFPYDAETDLTVYWFSYWGLAH) are extracellular. A helical transmembrane segment spans residues 210 to 230 (CAYVAGVSYVCVDLLLIATIT). Topologically, residues 231 to 276 (QLTMHFNFIANDLEAYEGGDHTDEENIKYLHNLVVYHARALDLSEE) are cytoplasmic. Residues 277–301 (VNNIFSFLILWNFIAASLVICFAGF) form a helical membrane-spanning segment. The Extracellular segment spans residues 302-310 (QITASNVED). Residues 311–331 (IVLYFIFFSASLVQVFVVCYY) form a helical membrane-spanning segment. Over 332 to 378 (GDEMISSSSRIGHSAFNQNWLPCSTKYKRILQFIIARSQKPASIRPP) the chain is Cytoplasmic. A helical membrane pass occupies residues 379-399 (TFPPISFNTFMKVISMSYQFF). Residues 400-408 (ALLRTTYYG) lie on the Extracellular side of the membrane.

Belongs to the insect chemoreceptor superfamily. Heteromeric odorant receptor channel (TC 1.A.69) family. Or49a subfamily. In terms of assembly, interacts with Orco. Complexes exist early in the endomembrane system in olfactory sensory neurons (OSNs), coupling these complexes to the conserved ciliary trafficking pathway.

It is found in the cell membrane. Functionally, odorant receptor which mediates acceptance or avoidance behavior, depending on its substrates. The odorant receptor repertoire encodes a large collection of odor stimuli that vary widely in identity, intensity, and duration. May form a complex with Orco to form odorant-sensing units, providing sensitive and prolonged odorant signaling and calcium permeability. The chain is Putative odorant receptor 92a (Or92a) from Drosophila melanogaster (Fruit fly).